Reading from the N-terminus, the 151-residue chain is Cell division control protein 2 homolog 2 (151 aa).

The 151-residue stretch at 1-151 (ALKEIRMDNE…IMQTLQIESL (151 aa)) folds into the Protein kinase domain. K3 is a binding site for ATP. Catalysis depends on D113, which acts as the Proton acceptor.

Belongs to the protein kinase superfamily. CMGC Ser/Thr protein kinase family. CDC2/CDKX subfamily.

The catalysed reaction is L-seryl-[protein] + ATP = O-phospho-L-seryl-[protein] + ADP + H(+). It catalyses the reaction L-threonyl-[protein] + ATP = O-phospho-L-threonyl-[protein] + ADP + H(+). It carries out the reaction [DNA-directed RNA polymerase] + ATP = phospho-[DNA-directed RNA polymerase] + ADP + H(+). This is Cell division control protein 2 homolog 2 from Pisum sativum (Garden pea).